The chain runs to 1113 residues: Protein KIBRA (1113 aa).

2 WW domains span residues 6-39 (LPLPEGWEEARDFDGKVYYIDHTNRTTSWIDPRD) and 53-86 (DELPLGWEEAYDPQVGDYFIDHNTKTTQIEDPRV). Coiled coils occupy residues 107-193 (LSAQ…RGFQ) and 293-431 (NSNN…SSMQ). Phosphoserine is present on Ser141. Disordered regions lie at residues 429-448 (SMQSLSSGSSPGSLTSSRGS) and 522-547 (RSLSGTPKSMTSLSPRSSLSSPSPPC). Residues 522–532 (RSLSGTPKSMT) show a composition bias toward polar residues. Residues 533-542 (SLSPRSSLSS) are compositionally biased toward low complexity. Ser535 bears the Phosphoserine mark. A Phosphoserine; by CDK1 modification is found at Ser542. The 124-residue stretch at 658–781 (GATRIQIALK…RSGERSTRWY (124 aa)) folds into the C2 domain. The segment at 825 to 975 (LEKRQEGRSS…RSVRMKRPSS (151 aa)) is disordered. The interval 839-1113 (EDSWRYEETS…NIPALSADDV (275 aa)) is interaction with histone H3. Residues 847–870 (TSENEAVAEEEEEEVEEEEGEEDV) are compositionally biased toward acidic residues. A Phosphoserine modification is found at Ser899. Thr912 carries the phosphothreonine modification. Over residues 924–938 (IIRSKTFSPGPQSQY) the composition is skewed to polar residues. Residue Ser927 is modified to Phosphoserine. Phosphothreonine is present on Thr929. Ser931 carries the post-translational modification Phosphoserine; by CDK1. The residue at position 947 (Ser947) is a Phosphoserine. Interaction with PRKCZ stretches follow at residues 953-996 (SKKP…LDLQ) and 956-975 (PPFVRNSLERRSVRMKRPSS). 2 positions are modified to phosphoserine; by PKC/PRKCZ: Ser975 and Ser978. The stretch at 1001–1032 (WHSQLTQEISVLKELKEQLEQAKSHGEKELPQ) forms a coiled coil. The short motif at 1111–1113 (DDV) is the ADDV motif element.

It belongs to the WWC family. KIBRA subfamily. In terms of assembly, homodimer. Forms heterodimers with WWC2 and WWC3. Interacts with DDN. Interacts with DYNLL1 and histone H3. The interaction with DYNLL1 is mandatory for the recruitment and transactivation functions of ESR1 or DYNLL1 to the target chromatin and the interaction with histone H3 ensures proper regulatory interaction of WWC1-DYNLL1-ESR1 complexes with target chromatin. Interacts (via WW domains) with DDR1 (via PPxY motif) in a collagen-regulated manner. Interacts with PRKCZ (via the protein kinase domain). Forms a tripartite complex with DDR1 and PRKCZ, but predominantly in the absence of collagen. Interacts (via the ADDV motif) with PATJ (via PDZ domain 8). Interacts (via WW domains) with SYNPO (via PPxY motifs). Interacts with NF2 and SNX4. Interacts with DLC1 and PRKCZ. Interacts (via WW domains) with LATS1 and LATS2. In terms of processing, phosphorylation at Ser-542 and Ser-931 by CDK1 in response to spindle damage stress regulates mitotic exit, these two sites are dephosphorylated by CDC14B. As to expression, expressed in mammary epithelial cells and breast cancer cell lines. Found in the luminal epithelium surrounding the ducts in the normal breast. In the brain, expressed in somatodendritic compartment of neurons in the cortex and hippocampus and in the cerebellum it is found in the Purkinje cells and some granule cells (at protein level). Detected in brain, heart, colon and kidney. In the kidney, expressed in glomerular podocytes, in some tubules and in the collecting duct.

The protein localises to the cytoplasm. The protein resides in the perinuclear region. It localises to the nucleus. Its subcellular location is the cell projection. It is found in the ruffle membrane. The protein localises to the cytosol. Functionally, regulator of the Hippo signaling pathway, also known as the Salvador-Warts-Hippo (SWH) pathway. Enhances phosphorylation of LATS1 and YAP1 and negatively regulates cell proliferation and organ growth due to a suppression of the transcriptional activity of YAP1, the major effector of the Hippo pathway. Along with NF2 can synergistically induce the phosphorylation of LATS1 and LATS2 and function in the regulation of Hippo signaling pathway. Acts as a transcriptional coactivator of ESR1 which plays an essential role in DYNLL1-mediated ESR1 transactivation. Regulates collagen-stimulated activation of the ERK/MAPK cascade. Modulates directional migration of podocytes. Plays a role in cognition and memory performance. Plays an important role in regulating AMPA-selective glutamate receptors (AMPARs) trafficking underlying synaptic plasticity and learning. This is Protein KIBRA from Homo sapiens (Human).